Reading from the N-terminus, the 2049-residue chain is Polyunsaturated fatty acid synthase subunit B (2049 aa).

2 Ketosynthase family 3 (KS3) domains span residues 15 to 442 and 468 to 908; these read EKRI…VFEE and NMRI…LLSD. Active-site for beta-ketoacyl synthase 1 activity residues include cysteine 196, histidine 333, and histidine 368. The interval 467-984 is chain length factor (CLF) domain; sequence NNMRIAITGM…LGETLAQEAD (518 aa). An acyltransferase (AT) domain region spans residues 1044–1377; sequence RVAFMYGEGR…QRSHVTGAMD (334 aa). Positions 1500-1531 are disordered; it reads NKDNQPAVAPAATAAPTPKPKPAASSGKPVPS. A compositionally biased stretch (low complexity) spans 1505-1531; it reads PAVAPAATAAPTPKPKPAASSGKPVPS. Residues 1579-1887 form an enoyl reductase (ER) domain region; the sequence is SRAFMKTYGV…SRANKLYELF (309 aa).

In terms of assembly, component of the polyunsaturated fatty acid synthase complex composed of at least ORF-A, ORF-B and ORF-C.

Its pathway is lipid metabolism; fatty acid biosynthesis. Functionally, poliketide synthase-like protein; part of the polyunsaturated fatty acid synthase composed of the 3 PKS-like subunits A, B and C. While the saturated fatty acids (SFAs) in Thraustochytrium are produced by the conventional fatty acid synthase (FAS) pathway, polyunsaturated fatty acids (PUFAs) including docosahexeanoic acid (DHA) and docosapentaenoic acid (DPA) are synthesized via an anaerobical PKS pathway. PUFA synthase assimilates fatty acyl-CoA, the product of FAS, as the starter unit to synthesize DPA, and this starter unit may be butyryl-CoA, hexanoyl-CoA, or octanoyl-CoA. DPA and DHA biosynthesis seem to differ by the reduction at the N-3 position by PUFA synthase, not the extension of carbon chain. In DHA biosynthesis, PUFA synthase extends the fatty acyl chain from the methyl toward the carboxyl end, and the double bond is formed when the carbon chain is growing, instead of afterward. Therefore, PUFA synthase is unable to transform DPA to DHA, suggesting that DPA is not the precursor of DHA. Moreover, DPA molecule is partly extended by FAS KS domain, so DPA biosynthesis is less dependent on PUFA synthase KS domain than DHA. This chain is Polyunsaturated fatty acid synthase subunit B, found in Thraustochytrium sp. (strain ATCC 26185 / S-3).